The primary structure comprises 690 residues: Glycine--tRNA ligase beta subunit (690 aa).

It belongs to the class-II aminoacyl-tRNA synthetase family. As to quaternary structure, tetramer of two alpha and two beta subunits.

Its subcellular location is the cytoplasm. The enzyme catalyses tRNA(Gly) + glycine + ATP = glycyl-tRNA(Gly) + AMP + diphosphate. The polypeptide is Glycine--tRNA ligase beta subunit (Buchnera aphidicola subsp. Acyrthosiphon pisum (strain 5A)).